The sequence spans 1244 residues: Membrane-associated phosphatidylinositol transfer protein 1 (1244 aa).

At Thr59 the chain carries Phosphothreonine. Disordered stretches follow at residues 258–331 and 339–358; these read KCNT…QSLS and ARDSENSSEEEFFDAHEGFS. Thr287 carries the phosphothreonine; by CDK1 modification. The segment covering 299–319 has biased composition (low complexity); the sequence is ASPDASFGKQWSSSSRSSYSS. Ser300, Ser304, Ser319, Ser326, Ser329, Ser342, Ser345, Ser346, and Ser373 each carry phosphoserine. Ser382 is subject to Phosphoserine; by CDK1. Residues 581 to 682 form a disordered region; it reads AGTGSRGSSR…SSEAPDGPSS (102 aa). Residues Ser593, Ser600, and Ser621 each carry the phosphoserine modification. Residues 643-658 show a composition bias toward polar residues; the sequence is GSQNSLQAAPATTSSW. Residues 686–880 enclose the DDHD domain; that stretch reads LDFKVSGFFL…VAFILRQVIE (195 aa). Position 896 is a phosphoserine (Ser896). Residues 1206–1244 are disordered; that stretch reads QLLRSRGPSQAEREGPGTPPTTLARGKARSISLKLDSEE. 2 positions are modified to omega-N-methylarginine: Arg1211 and Arg1218. Position 1237 is a phosphoserine (Ser1237).

This sequence belongs to the PtdIns transfer protein family. PI transfer class IIA subfamily. Interacts with PIK4CA. Interacts with PTK2B via its C-terminus. Interacts with RHOA. Has higher affinity for the inactive, GDP-bound form of RHOA. The CDK1-phosphorylated form interacts with PLK1. Interacts with VAPB. Post-translationally, phosphorylated on multiple sites by CDK1 at the onset of mitosis. Phosphorylation facilitates dissociation from the Golgi complex and is required for interaction with PLK1. In terms of processing, phosphorylated on threonine residues upon treatment with oleic acid. Phosphorylated on tyrosine residues by PTK2B. As to expression, ubiquitous.

It is found in the cytoplasm. The protein resides in the golgi apparatus. Its subcellular location is the golgi stack membrane. The protein localises to the endoplasmic reticulum membrane. It localises to the lipid droplet. It is found in the cleavage furrow. The protein resides in the midbody. The enzyme catalyses a 1,2-diacyl-sn-glycero-3-phospho-(1D-myo-inositol)(in) = a 1,2-diacyl-sn-glycero-3-phospho-(1D-myo-inositol)(out). Its function is as follows. Catalyzes the transfer of phosphatidylinositol (PI) between membranes. Binds PI, phosphatidylcholine (PC) and phosphatidic acid (PA) with the binding affinity order of PI &gt; PA &gt; PC. Regulates RHOA activity, and plays a role in cytoskeleton remodeling. Necessary for normal completion of cytokinesis. Plays a role in maintaining normal diacylglycerol levels in the Golgi apparatus. Necessary for maintaining the normal structure of the endoplasmic reticulum and the Golgi apparatus. Required for protein export from the endoplasmic reticulum and the Golgi. Binds calcium ions. This chain is Membrane-associated phosphatidylinositol transfer protein 1 (PITPNM1), found in Homo sapiens (Human).